The primary structure comprises 36 residues: Kappa-actitoxin-Avd6a (36 aa).

The 35-residue stretch at 2 to 36 (CKDNFAAATCKHVKENKNCGSQKYATNCAKTCGKC) folds into the ShKT domain. 3 disulfide bridges follow: Cys-2–Cys-36, Cys-11–Cys-29, and Cys-20–Cys-33. Residues 24 to 25 (KY) form a crucial for binding to potassium channels region.

Belongs to the sea anemone type 1 potassium channel toxin family. Type 1b subfamily.

Its subcellular location is the secreted. The protein resides in the nematocyst. Its function is as follows. Blocks voltage-gated potassium channels Kv1.2/KCNA2 (IC(50)=140 nM). This is Kappa-actitoxin-Avd6a from Anemonia sulcata (Mediterranean snakelocks sea anemone).